The following is a 221-amino-acid chain: Probable GTP-binding protein EngB (221 aa).

The EngB-type G domain occupies 23-211 (PLREVAFAGR…DNLIIKWLFE (189 aa)). The Mg(2+) site is built by serine 38 and threonine 60.

This sequence belongs to the TRAFAC class TrmE-Era-EngA-EngB-Septin-like GTPase superfamily. EngB GTPase family. Requires Mg(2+) as cofactor.

Functionally, necessary for normal cell division and for the maintenance of normal septation. The sequence is that of Probable GTP-binding protein EngB from Polynucleobacter asymbioticus (strain DSM 18221 / CIP 109841 / QLW-P1DMWA-1) (Polynucleobacter necessarius subsp. asymbioticus).